The sequence spans 129 residues: Follitropin subunit beta (129 aa).

Residues 1-20 (MKSVQFCFLFCCWRAICCRS) form the signal peptide. 6 disulfide bridges follow: Cys-21–Cys-69, Cys-35–Cys-84, Cys-38–Cys-122, Cys-46–Cys-100, Cys-50–Cys-102, and Cys-105–Cys-112. N-linked (GlcNAc...) asparagine glycans are attached at residues Asn-25 and Asn-42.

Belongs to the glycoprotein hormones subunit beta family. In terms of assembly, heterodimer. The active follitropin is a heterodimer composed of an alpha chain/CGA shared with other hormones and a unique beta chain/FSHB shown here.

It localises to the secreted. Together with the alpha chain CGA constitutes follitropin, the follicle-stimulating hormone, and provides its biological specificity to the hormone heterodimer. Binds FSHR, a G protein-coupled receptor, on target cells to activate downstream signaling pathways. Follitropin is involved in follicle development and spermatogenesis in reproductive organs. This chain is Follitropin subunit beta (FSHB), found in Bos taurus (Bovine).